The chain runs to 1480 residues: C-type mannose receptor 2 (1480 aa).

An N-terminal signal peptide occupies residues M1 to P30. Topologically, residues A31–A1413 are extracellular. Residues P40 to L166 form the Ricin B-type lectin domain. Disulfide bonds link C53/C67 and C92/C111. Residues N101 and N139 are each glycosylated (N-linked (GlcNAc...) asparagine). One can recognise a Fibronectin type-II domain in the interval S181–I229. 4 disulfide bridges follow: C186/C212, C200/C227, C265/C358, and C334/C350. Residues L243–K359 enclose the C-type lectin 1 domain. A glycan (N-linked (GlcNAc...) asparagine) is linked at N363. 7 consecutive C-type lectin domains span residues F388 to K504, H527 to C643, K677 to K808, F831 to K950, F978 to C1106, Y1131 to C1242, and F1271 to C1391. Intrachain disulfides connect C409–C503, C480–C495, C617–C634, C703–C807, C784–C799, C852–C949, and C926–C941. A glycan (N-linked (GlcNAc...) asparagine) is linked at N1028. Residues C1077 and C1097 are joined by a disulfide bond. A Glycyl lysine isopeptide (Lys-Gly) (interchain with G-Cter in SUMO1) cross-link involves residue K1141. C1219 and C1233 are oxidised to a cystine. N1348 carries N-linked (GlcNAc...) asparagine glycosylation. A disulfide bridge connects residues C1367 and C1382. Residues L1414 to I1434 traverse the membrane as a helical segment. Residues L1435–E1480 are Cytoplasmic-facing. Residues S1446–E1480 are disordered.

As to quaternary structure, interacts directly with PLAUR/UPAR and PLAU/pro-UPA to form a tri-molecular complex. Interacts with collagen V. Interacts with C-terminal region of type I collagen/COL1A1. Post-translationally, N-glycosylated. Phosphorylated.

The protein localises to the cell membrane. Its function is as follows. May play a role as endocytotic lectin receptor displaying calcium-dependent lectin activity. Internalizes glycosylated ligands from the extracellular space for release in an endosomal compartment via clathrin-mediated endocytosis. May be involved in plasminogen activation system controlling the extracellular level of PLAUR/PLAU, and thus may regulate protease activity at the cell surface. May contribute to cellular uptake, remodeling and degradation of extracellular collagen matrices. May participate in remodeling of extracellular matrix cooperating with the matrix metalloproteinases (MMPs) secreted by hepatic stellate cells. May mediate endocytosis of partially degraded collagens and glycoproteins produced in the extracellular matrix by MMPs. The chain is C-type mannose receptor 2 (Mrc2) from Rattus norvegicus (Rat).